A 327-amino-acid polypeptide reads, in one-letter code: L-lactate dehydrogenase (327 aa).

NAD(+) is bound by residues valine 18, aspartate 39, lysine 44, tyrosine 69, and 83–84 (GA). Substrate contacts are provided by residues glutamine 86, arginine 92, and 124–127 (NPVD). Residues 122 to 124 (AAN) and serine 147 each bind NAD(+). Residue 152–155 (DSAR) coordinates substrate. 2 residues coordinate beta-D-fructose 1,6-bisphosphate: arginine 157 and histidine 172. Catalysis depends on histidine 179, which acts as the Proton acceptor. A Phosphotyrosine modification is found at tyrosine 224. Threonine 233 provides a ligand contact to substrate.

This sequence belongs to the LDH/MDH superfamily. LDH family. In terms of assembly, homotetramer.

It localises to the cytoplasm. The enzyme catalyses (S)-lactate + NAD(+) = pyruvate + NADH + H(+). It functions in the pathway fermentation; pyruvate fermentation to lactate; (S)-lactate from pyruvate: step 1/1. Its activity is regulated as follows. Allosterically activated by fructose 1,6-bisphosphate (FBP). Catalyzes the conversion of lactate to pyruvate. This Streptococcus equi subsp. equi (strain 4047) protein is L-lactate dehydrogenase.